The chain runs to 83 residues: Weak toxin DE-1 homolog 1 (83 aa).

An N-terminal signal peptide occupies residues Met1–Thr21. 4 disulfide bridges follow: Cys24–Cys45, Cys38–Cys62, Cys64–Cys75, and Cys76–Cys81.

It belongs to the three-finger toxin family. Short-chain subfamily. Type I alpha-neurotoxin sub-subfamily. As to expression, expressed by the venom gland.

It localises to the secreted. Its function is as follows. Binds to muscle nicotinic acetylcholine receptor (nAChR) and inhibit acetylcholine from binding to the receptor, thereby impairing neuromuscular transmission. The sequence is that of Weak toxin DE-1 homolog 1 from Ophiophagus hannah (King cobra).